The primary structure comprises 513 residues: Protein disulfide-isomerase (513 aa).

An N-terminal signal peptide occupies residues 1–25 (MAISKVWISLLLALAVVLSAPAARA). The Thioredoxin 1 domain maps to 26–149 (EEAAAAEEAA…IVEYLKKQVG (124 aa)). Catalysis depends on nucleophile residues Cys67 and Cys70. Cysteines 67 and 70 form a disulfide. A glycan (N-linked (GlcNAc...) asparagine) is linked at Asn282. The region spanning 369 to 488 (FRKSEPIPEA…IVDYIRKNKE (120 aa)) is the Thioredoxin 2 domain. Catalysis depends on nucleophile residues Cys411 and Cys414. Residues Cys411 and Cys414 are joined by a disulfide bond. Residues 491–507 (GQAAAATEKAAEPAATE) show a composition bias toward low complexity. Positions 491–513 (GQAAAATEKAAEPAATEPLKDEL) are disordered. The Prevents secretion from ER motif lies at 510-513 (KDEL).

This sequence belongs to the protein disulfide isomerase family.

It localises to the endoplasmic reticulum lumen. The enzyme catalyses Catalyzes the rearrangement of -S-S- bonds in proteins.. In terms of biological role, participates in the folding of proteins containing disulfide bonds, may be involved in glycosylation, prolyl hydroxylation and triglyceride transfer. The chain is Protein disulfide-isomerase (PDI) from Hordeum vulgare (Barley).